We begin with the raw amino-acid sequence, 122 residues long: Small ribosomal subunit protein uS13 (122 aa).

Residues 93-122 (RKGLPVRGQTTKNNARTRKGKRKTVGSASK) are disordered. Positions 107-116 (ARTRKGKRKT) are enriched in basic residues.

This sequence belongs to the universal ribosomal protein uS13 family. As to quaternary structure, part of the 30S ribosomal subunit. Forms a loose heterodimer with protein S19. Forms two bridges to the 50S subunit in the 70S ribosome.

In terms of biological role, located at the top of the head of the 30S subunit, it contacts several helices of the 16S rRNA. In the 70S ribosome it contacts the 23S rRNA (bridge B1a) and protein L5 of the 50S subunit (bridge B1b), connecting the 2 subunits; these bridges are implicated in subunit movement. Contacts the tRNAs in the A and P-sites. This is Small ribosomal subunit protein uS13 from Wolinella succinogenes (strain ATCC 29543 / DSM 1740 / CCUG 13145 / JCM 31913 / LMG 7466 / NCTC 11488 / FDC 602W) (Vibrio succinogenes).